The primary structure comprises 275 residues: MDLFMRIFTIGTVTLKQGEIKDATPSDFVRATATIPIQASLPFGWLIVGVALLAVFQSASKIITLKKRWQLALSKGVHFVCNLLLLFVTVYSHLLLVAAGLEAPFLYLYALVYFLQSINFVRIIMRLWLCWKCRSKNPLLYDANYFLCWHTNCYDYCIPYNSVTSSIVITSGDGTTSPISEHDYQIGGYTEKWESGVKDCVVLHSYFTSDYYQLYSTQLSTDTGVEHVTFFIYNKIVDEPEEHVQIHTIDGSSGVVNPVMEPIYDEPTTTTSVPL.

The interval 1 to 39 is disordered; it reads MDLFMRIFTIGTVTLKQGEIKDATPSDFVRATATIPIQA. The Extracellular segment spans residues 1 to 42; it reads MDLFMRIFTIGTVTLKQGEIKDATPSDFVRATATIPIQASLP. O-linked (GalNAc...) threonine; by host glycosylation is found at Thr-32 and Thr-34. Residues 33 to 141 enclose the CoV 3a-like viroporin TM domain; that stretch reads ATIPIQASLP…KCRSKNPLLY (109 aa). The helical transmembrane segment at 43-61 threads the bilayer; it reads FGWLIVGVALLAVFQSASK. The Cytoplasmic segment spans residues 62–67; the sequence is IITLKK. A helical membrane pass occupies residues 68–93; sequence RWQLALSKGVHFVCNLLLLFVTVYSH. Over 94 to 101 the chain is Extracellular; that stretch reads LLLVAAGL. Residues 102-126 traverse the membrane as a helical segment; it reads EAPFLYLYALVYFLQSINFVRIIMR. Topologically, residues 127-275 are cytoplasmic; it reads LWLCWKCRSK…EPTTTTSVPL (149 aa). The region spanning 145–237 is the CoV 3a-like viroporin CD domain; sequence YFLCWHTNCY…VTFFIYNKIV (93 aa). The segment at 239 to 275 is disordered; the sequence is EPEEHVQIHTIDGSSGVVNPVMEPIYDEPTTTTSVPL.

As to quaternary structure, homodimer, a subset forms homotetramer of two homodimers linked non covalently. Interacts with M, S and E proteins. Also interacts with the accessory protein 7a. Interacts with host VPS39, sequestering it on late endosomes. Interacts with host HMGB1; the interaction enhances the association between HMGB1 and host BECN1, promoting reticulophagy. Interacts with HMOX1; the interaction promotes ORF3A-induced autophagy but is unlikely to be involved in ORF3A-mediated induction of reticulophagy. Post-translationally, exists in both O-glycosylated and non-glycosylated forms. The glycosylated form is associated with the virion.

The protein localises to the virion. The protein resides in the host cell membrane. It is found in the host endoplasmic reticulum membrane. Its subcellular location is the secreted. It localises to the host cytoplasm. The protein localises to the host endosome. The protein resides in the host lysosome. In terms of biological role, plays a role in viral egress via lysosomal trafficking. Forms homotetrameric ion channels (viroporins) localized at endosomes and lysosomes, that may induce deacidification of lysosomes, allowing safe egress of virions via lysosomal trafficking. Also blocks autolysosome formation by binding and sequestering the host component VPS39 for homotypic fusion and protein sorting (HOPS) on late endosomes. This prevents fusion of autophagosomes with lysosomes, disrupting autophagy and facilitating virus egress. Induces host RETREG1/FAM134B-dependent reticulophagy by interacting with host HMGB1 and enhancing the association between HMGB1 and host BECN1. This induces endoplasmic reticulum stress and inflammatory responses and facilitates viral infection. The sequence is that of ORF3a protein from Severe acute respiratory syndrome coronavirus 2 (2019-nCoV).